A 579-amino-acid polypeptide reads, in one-letter code: Basic helix-loop-helix ARNT-like protein 2 (579 aa).

The interaction with PER2 stretch occupies residues 1-198; that stretch reads MEFPRKRRGR…SPREKPIDTK (198 aa). The Nuclear localization signal motif lies at 4–9; that stretch reads PRKRRG. The segment at 40–61 is disordered; that stretch reads RTGVSAPSGIREAHSQMEKRRR. The bHLH domain maps to 48-101; sequence GIREAHSQMEKRRRDKMNHLIQKLSSMIPPHIPTAHKLDKLSVLRRAVQYLRSL. The span at 50 to 59 shows a compositional bias: basic and acidic residues; that stretch reads REAHSQMEKR. The Nuclear export signal 1 signature appears at 118–128; that stretch reads IQDKELSHLIL. The region spanning 119–190 is the PAS 1 domain; sequence QDKELSHLIL…KEQLSCDGSP (72 aa). Positions 186 to 196 are enriched in basic and acidic residues; the sequence is CDGSPREKPID. A disordered region spans residues 186-213; that stretch reads CDGSPREKPIDTKTSQVYSHPYTGRPRM. Lysine 226 participates in a covalent cross-link: Glycyl lysine isopeptide (Lys-Gly) (interchain with G-Cter in SUMO2 and SUMO3). Lysine 233 participates in a covalent cross-link: Glycyl lysine isopeptide (Lys-Gly) (interchain with G-Cter in SUMO2). The region spanning 296 to 366 is the PAS 2 domain; it reads VPQKSGKINV…DKHKAVLQSK (71 aa). The Nuclear export signal 2 motif lies at 331–339; sequence LGYLPQELL. A PAC domain is found at 371 to 414; that stretch reads TDSYKFRVKDGAFVTLKSEWFSFTNPWTKELEYIVSVNTLVLGR. Residues 469–536 form a disordered region; the sequence is RLHSSSPEDA…AHPHGPLPGD (68 aa).

Component of the circadian core oscillator, which includes the CRY proteins, CLOCK, or NPAS2, BMAL1 or BMAL2, CSNK1D and/or CSNK1E, TIMELESS and the PER proteins. Interacts directly with CLOCK to form the BMAL2-CLOCK transactivator. Can form heterodimers or homodimers which interact directly with CLOCK to form the transcription activator. Interacts with NPAS2 and HIF1A. Interacts with PER2. As to expression, expressed in the suprachiasmatic nucleus (SCN).

Its subcellular location is the nucleus. Its function is as follows. Transcriptional activator which forms a core component of the circadian clock. The circadian clock, an internal time-keeping system, regulates various physiological processes through the generation of approximately 24 hour circadian rhythms in gene expression, which are translated into rhythms in metabolism and behavior. It is derived from the Latin roots 'circa' (about) and 'diem' (day) and acts as an important regulator of a wide array of physiological functions including metabolism, sleep, body temperature, blood pressure, endocrine, immune, cardiovascular, and renal function. Consists of two major components: the central clock, residing in the suprachiasmatic nucleus (SCN) of the brain, and the peripheral clocks that are present in nearly every tissue and organ system. Both the central and peripheral clocks can be reset by environmental cues, also known as Zeitgebers (German for 'timegivers'). The predominant Zeitgeber for the central clock is light, which is sensed by retina and signals directly to the SCN. The central clock entrains the peripheral clocks through neuronal and hormonal signals, body temperature and feeding-related cues, aligning all clocks with the external light/dark cycle. Circadian rhythms allow an organism to achieve temporal homeostasis with its environment at the molecular level by regulating gene expression to create a peak of protein expression once every 24 hours to control when a particular physiological process is most active with respect to the solar day. Transcription and translation of core clock components (CLOCK, NPAS2, BMAL1, BMAL2, PER1, PER2, PER3, CRY1 and CRY2) plays a critical role in rhythm generation, whereas delays imposed by post-translational modifications (PTMs) are important for determining the period (tau) of the rhythms (tau refers to the period of a rhythm and is the length, in time, of one complete cycle). A diurnal rhythm is synchronized with the day/night cycle, while the ultradian and infradian rhythms have a period shorter and longer than 24 hours, respectively. Disruptions in the circadian rhythms contribute to the pathology of cardiovascular diseases, cancer, metabolic syndromes and aging. A transcription/translation feedback loop (TTFL) forms the core of the molecular circadian clock mechanism. Transcription factors, CLOCK or NPAS2 and BMAL1 or BMAL2, form the positive limb of the feedback loop, act in the form of a heterodimer and activate the transcription of core clock genes and clock-controlled genes (involved in key metabolic processes), harboring E-box elements (5'-CACGTG-3') within their promoters. The core clock genes: PER1/2/3 and CRY1/2 which are transcriptional repressors form the negative limb of the feedback loop and interact with the CLOCK|NPAS2-BMAL1|BMAL2 heterodimer inhibiting its activity and thereby negatively regulating their own expression. This heterodimer also activates nuclear receptors NR1D1/2 and RORA/B/G, which form a second feedback loop and which activate and repress BMAL1 transcription, respectively. The CLOCK-BMAL2 heterodimer activates the transcription of SERPINE1/PAI1 and BHLHE40/DEC1. The chain is Basic helix-loop-helix ARNT-like protein 2 (Bmal2) from Mus musculus (Mouse).